The chain runs to 431 residues: UDP-N-acetylmuramoylalanine--D-glutamate ligase (431 aa).

111 to 117 (GTDGKST) is an ATP binding site.

It belongs to the MurCDEF family.

The protein localises to the cytoplasm. The enzyme catalyses UDP-N-acetyl-alpha-D-muramoyl-L-alanine + D-glutamate + ATP = UDP-N-acetyl-alpha-D-muramoyl-L-alanyl-D-glutamate + ADP + phosphate + H(+). Its pathway is cell wall biogenesis; peptidoglycan biosynthesis. In terms of biological role, cell wall formation. Catalyzes the addition of glutamate to the nucleotide precursor UDP-N-acetylmuramoyl-L-alanine (UMA). This is UDP-N-acetylmuramoylalanine--D-glutamate ligase from Petrotoga mobilis (strain DSM 10674 / SJ95).